The following is an 88-amino-acid chain: Exodeoxyribonuclease 7 small subunit (88 aa).

A disordered region spans residues 69-88 (DPMHPDDGEPFDPSLVSTSQ).

Belongs to the XseB family. As to quaternary structure, heterooligomer composed of large and small subunits.

The protein localises to the cytoplasm. It carries out the reaction Exonucleolytic cleavage in either 5'- to 3'- or 3'- to 5'-direction to yield nucleoside 5'-phosphates.. Functionally, bidirectionally degrades single-stranded DNA into large acid-insoluble oligonucleotides, which are then degraded further into small acid-soluble oligonucleotides. The sequence is that of Exodeoxyribonuclease 7 small subunit from Xylella fastidiosa (strain M23).